A 66-amino-acid polypeptide reads, in one-letter code: U10-theraphotoxin-Cg1a 2 (66 aa).

Positions 1-21 are cleaved as a signal peptide; that stretch reads MKTSVLFVIFGLALLLCLSFA. Residues 22–29 constitute a propeptide that is removed on maturation; sequence AELEDTGR. Disulfide bonds link C31/C46, C38/C51, and C45/C58.

The protein belongs to the neurotoxin 10 (Hwtx-1) family. 29 (Jztx-13) subfamily. Expressed by the venom gland.

The protein localises to the secreted. In terms of biological role, probable ion channel inhibitor. This is U10-theraphotoxin-Cg1a 2 from Chilobrachys guangxiensis (Chinese earth tiger tarantula).